The chain runs to 122 residues: UPF0102 protein VCM66_0538 (122 aa).

It belongs to the UPF0102 family.

The protein is UPF0102 protein VCM66_0538 of Vibrio cholerae serotype O1 (strain M66-2).